The primary structure comprises 440 residues: MLETSQTIPELVNWTREREFSLSLSTERLAFLLAIAIYNNERLDGEMLETDLIDIFRHISNTFEQSAETISTRANNSINELVKQRFLNRFSSEFTEGLSIYRLTPLGVGVSDYYIRQREFSALRLSVQLSIVADEIQRASEAAEEGGDEHYWRKNVFAPLKYSVAEIFDSIDLSQRMMDENQQHIKEEIAELLTKDWQTAIASCERLLDETSGNLRELQDTLNAAGDKLQSQLLRIQDCVIGHDNLYFVEQLIVDLQAKLDRIISWGQQAIDLWIGYDRHVHKFIRTAIDLDKNRVFSQRLRQSIHHYFDHPWFLWIAQAERLIDLREEELTLREEEALGELPEELQYESLADLHEQIVETMQSLLIEYRLQNTPIDLSEVLTAQLKQYPLAKHFDIARIIIDQAVRLGLAQDDLNGIYPNWRSINENGAEVQAHVIDKY.

Residues leucine 208–isoleucine 236 form a leucine-zipper region.

This sequence belongs to the MukF family. Interacts, and probably forms a ternary complex, with MukE and MukB via its C-terminal region. The complex formation is stimulated by calcium or magnesium. It is required for an interaction between MukE and MukB.

It localises to the cytoplasm. The protein resides in the nucleoid. In terms of biological role, involved in chromosome condensation, segregation and cell cycle progression. May participate in facilitating chromosome segregation by condensation DNA from both sides of a centrally located replisome during cell division. Not required for mini-F plasmid partitioning. Probably acts via its interaction with MukB and MukE. Overexpression results in anucleate cells. It has a calcium binding activity. This Histophilus somni (strain 129Pt) (Haemophilus somnus) protein is Chromosome partition protein MukF.